Reading from the N-terminus, the 382-residue chain is Enoyl-[acyl-carrier-protein] reductase, mitochondrial (382 aa).

A mitochondrion-targeting transit peptide spans 1 to 17; it reads MSSFLSKRFLSFSQRAM. The active-site Proton donor is Tyr77. Residues Asn159, 187-190, 210-212, 285-288, 310-312, and Lys375 each bind NADP(+); these read TSSV, RDR, YGGM, and FWV.

Belongs to the zinc-containing alcohol dehydrogenase family. Quinone oxidoreductase subfamily. As to quaternary structure, homodimer.

The protein localises to the mitochondrion matrix. It carries out the reaction a 2,3-saturated acyl-[ACP] + NADP(+) = a (2E)-enoyl-[ACP] + NADPH + H(+). In terms of biological role, catalyzes the NADPH-dependent reduction of trans-2-enoyl thioesters in mitochondrial fatty acid synthesis (fatty acid synthesis type II). Fatty acid chain elongation in mitochondria uses acyl carrier protein (ACP) as an acyl group carrier, but the enzyme accepts both ACP and CoA thioesters as substrates in vitro. Required for respiration and the maintenance of the mitochondrial compartment. This is Enoyl-[acyl-carrier-protein] reductase, mitochondrial (ETR1) from Kluyveromyces lactis (strain ATCC 8585 / CBS 2359 / DSM 70799 / NBRC 1267 / NRRL Y-1140 / WM37) (Yeast).